A 382-amino-acid polypeptide reads, in one-letter code: Kelch domain-containing protein 3 (382 aa).

Kelch repeat units lie at residues 25 to 77 (RVYS…PYMR), 88 to 138 (TVFL…VLGK), 139 to 189 (TMYI…TMLG), 191 to 249 (HMYV…GYNG), and 251 to 301 (LYIF…IVGD).

In terms of assembly, component of a CRL2(KLHDC3) complex, also named ECS(KLHDC3) complex, composed of CUL2, Elongin BC (ELOB and ELOC), RBX1 and substrate-specific adapter KLHDC3. May form oligomers as a KLHDC3-ELOB-ELOC complex; this interaction is likely autoinhibitory for the E3 ligase complex.

It is found in the cytoplasm. It functions in the pathway protein modification; protein ubiquitination. Substrate-recognition component of a Cul2-RING (CRL2) E3 ubiquitin-protein ligase complex of the DesCEND (destruction via C-end degrons) pathway, which recognizes a C-degron located at the extreme C terminus of target proteins, leading to their ubiquitination and degradation. The C-degron recognized by the DesCEND pathway is usually a motif of less than ten residues and can be present in full-length proteins, truncated proteins or proteolytically cleaved forms. The CRL2(KLHDC3) complex specifically recognizes proteins with a glycine (Gly) at the C-terminus, leading to their ubiquitination and degradation: recognizes the C-terminal -Arg-(Xaa)n-Arg-Gly, -Arg-(Xaa)n-Lys-Gly, and -Arg-(Xaa)n-Gln-Gly degrons. The CRL2(KLHDC3) complex mediates ubiquitination and degradation of truncated SELENOV and SEPHS2 selenoproteins produced by failed UGA/Sec decoding, which end with a glycine. May be involved in meiotic recombination process. The polypeptide is Kelch domain-containing protein 3 (Bos taurus (Bovine)).